The following is a 280-amino-acid chain: C-type lectin domain family 1 member A (280 aa).

The disordered stretch occupies residues 1 to 44 (MQAKYSSTRDMLDDDGDTTMSLHSQGSATTRHPEPRRTEHRAPS). Residues 1–52 (MQAKYSSTRDMLDDDGDTTMSLHSQGSATTRHPEPRRTEHRAPSSTWRPVAL) are Cytoplasmic-facing. The segment covering 18-30 (TTMSLHSQGSATT) has biased composition (polar residues). The segment covering 31–42 (RHPEPRRTEHRA) has biased composition (basic and acidic residues). Residues 53-73 (TLLTLCLVLLIGLAALGLLFF) traverse the membrane as a helical; Signal-anchor for type II membrane protein segment. The Extracellular segment spans residues 74 to 280 (QYYQLSNTGQ…VPPETLGEGD (207 aa)). N-linked (GlcNAc...) asparagine glycans are attached at residues Asn95 and Asn169. The C-type lectin domain occupies 144-258 (HGDNCYQFYK…CKELKRCVCE (115 aa)). 2 disulfide bridges follow: Cys165-Cys257 and Cys236-Cys249.

As to expression, expressed preferentially in dendritic cells.

It localises to the membrane. In Homo sapiens (Human), this protein is C-type lectin domain family 1 member A (CLEC1A).